The following is a 386-amino-acid chain: Acyl-lipid omega-3 desaturase (cytochrome b5), endoplasmic reticulum (386 aa).

Residues 1-30 are disordered; that stretch reads MVVAMDQRTNVNGDPGAGDRKKEERFDPSA. Basic and acidic residues predominate over residues 17 to 27; it reads AGDRKKEERFD. A helical membrane pass occupies residues 63-83; sequence IIAVAALAIAAVYVDSWFLWP. The short motif at 101–105 is the Histidine box-1 element; the sequence is HDCGH. A Histidine box-2 motif is present at residues 137 to 141; sequence HRTHH. 2 helical membrane-spanning segments follow: residues 220-240 and 242-262; these read WSIM…LAVL and VYGV…YLHH. A Histidine box-3 motif is present at residues 304–308; the sequence is HVIHH.

The protein belongs to the fatty acid desaturase type 1 family. As to expression, abundant in leaves and seedlings. Barely detectable in root tissue.

The protein resides in the endoplasmic reticulum membrane. The enzyme catalyses a (9Z,12Z)-octadecadienoyl-containing glycerolipid + 2 Fe(II)-[cytochrome b5] + O2 + 2 H(+) = (9Z,12Z,15Z)-octadecatrienoyl-containing glycerolipid + 2 Fe(III)-[cytochrome b5] + 2 H2O. The protein operates within lipid metabolism; polyunsaturated fatty acid biosynthesis. Microsomal (ER) omega-3 fatty acid desaturase introduces the third double bond in the biosynthesis of 18:3 fatty acids, important constituents of plant membranes. It is thought to use cytochrome b5 as an electron donor and to act on fatty acids esterified to phosphatidylcholine and, possibly, other phospholipids. This Arabidopsis thaliana (Mouse-ear cress) protein is Acyl-lipid omega-3 desaturase (cytochrome b5), endoplasmic reticulum.